Reading from the N-terminus, the 481-residue chain is MTIIKGNRCDWEVVIGLEVHAQVISNSKLFSGASTKTYDALPNTQVALFDVAMPGMLPVLNEYCVYQAIKTGIALSCKINKYSAFDRKNYFYPDLPSGYQITQFYYPIATEGKIVLEDHDMKEIRIARIHLEQDAGKSIHEFDKTYIDFNRAGVALMEIVSEPDFRSIEEVAEYLKKLRMILRFIETCDGDMEKGSLRCDANVSVKPVGSSELGIRSEIKNLNSIRYVMQAIEYEANRQVNALENGEIVTQNTLLFDVTSGQTRVIRTKEDAHDYRYFPDPDLFPLKIDDQYIDHVRSSLPELPMQKRERYTNDFSLSKYDADILSSDKDVAIYFEKVAEKHDGKLAASWITGELFGRLNRLGITIGESSVTAEDLIQLLDLIVNNTISGKIAKQVFDMMFESGKSPALIVSEHGLKQVSDENALSVIVERVLKNNASKVVEYKQGKEKLFGYFVGQVMKETQGKANPDMVNSIIKQQLEN.

The protein belongs to the GatB/GatE family. GatB subfamily. In terms of assembly, heterotrimer of A, B and C subunits.

The enzyme catalyses L-glutamyl-tRNA(Gln) + L-glutamine + ATP + H2O = L-glutaminyl-tRNA(Gln) + L-glutamate + ADP + phosphate + H(+). It catalyses the reaction L-aspartyl-tRNA(Asn) + L-glutamine + ATP + H2O = L-asparaginyl-tRNA(Asn) + L-glutamate + ADP + phosphate + 2 H(+). Its function is as follows. Allows the formation of correctly charged Asn-tRNA(Asn) or Gln-tRNA(Gln) through the transamidation of misacylated Asp-tRNA(Asn) or Glu-tRNA(Gln) in organisms which lack either or both of asparaginyl-tRNA or glutaminyl-tRNA synthetases. The reaction takes place in the presence of glutamine and ATP through an activated phospho-Asp-tRNA(Asn) or phospho-Glu-tRNA(Gln). This chain is Aspartyl/glutamyl-tRNA(Asn/Gln) amidotransferase subunit B, found in Ehrlichia chaffeensis (strain ATCC CRL-10679 / Arkansas).